The sequence spans 355 residues: Holliday junction branch migration complex subunit RuvB (355 aa).

Residues 4 to 190 (TDKLAAERII…FGIVARLEFY (187 aa)) are large ATPase domain (RuvB-L). ATP-binding positions include L29, R30, G71, K74, T75, T76, 137 to 139 (EDY), R180, Y190, and R227. Residue T75 coordinates Mg(2+). A small ATPAse domain (RuvB-S) region spans residues 191 to 261 (NAEQLARIVT…VADAALKMLD (71 aa)). Residues 264 to 355 (AVGFDLMDRK…LPGLWDSAAT (92 aa)) form a head domain (RuvB-H) region. R300, R319, and R324 together coordinate DNA.

It belongs to the RuvB family. In terms of assembly, homohexamer. Forms an RuvA(8)-RuvB(12)-Holliday junction (HJ) complex. HJ DNA is sandwiched between 2 RuvA tetramers; dsDNA enters through RuvA and exits via RuvB. An RuvB hexamer assembles on each DNA strand where it exits the tetramer. Each RuvB hexamer is contacted by two RuvA subunits (via domain III) on 2 adjacent RuvB subunits; this complex drives branch migration. In the full resolvosome a probable DNA-RuvA(4)-RuvB(12)-RuvC(2) complex forms which resolves the HJ.

The protein resides in the cytoplasm. The catalysed reaction is ATP + H2O = ADP + phosphate + H(+). The RuvA-RuvB-RuvC complex processes Holliday junction (HJ) DNA during genetic recombination and DNA repair, while the RuvA-RuvB complex plays an important role in the rescue of blocked DNA replication forks via replication fork reversal (RFR). RuvA specifically binds to HJ cruciform DNA, conferring on it an open structure. The RuvB hexamer acts as an ATP-dependent pump, pulling dsDNA into and through the RuvAB complex. RuvB forms 2 homohexamers on either side of HJ DNA bound by 1 or 2 RuvA tetramers; 4 subunits per hexamer contact DNA at a time. Coordinated motions by a converter formed by DNA-disengaged RuvB subunits stimulates ATP hydrolysis and nucleotide exchange. Immobilization of the converter enables RuvB to convert the ATP-contained energy into a lever motion, pulling 2 nucleotides of DNA out of the RuvA tetramer per ATP hydrolyzed, thus driving DNA branch migration. The RuvB motors rotate together with the DNA substrate, which together with the progressing nucleotide cycle form the mechanistic basis for DNA recombination by continuous HJ branch migration. Branch migration allows RuvC to scan DNA until it finds its consensus sequence, where it cleaves and resolves cruciform DNA. This Paraburkholderia xenovorans (strain LB400) protein is Holliday junction branch migration complex subunit RuvB.